Reading from the N-terminus, the 436-residue chain is MAVSSSNPTQTRTYVLDTSVLLADPASMSRFAEHEVVIPIVVINELEAKRHHPELGYFAREALRFLDDLRVRHGRLDQPVPIGEGTIRVELNHSDPAVLPAGLRSGDNDSRILTVAQNLAAEGRDVVLVSKDLPMRLKAASLGLNAEEYRAGMVIESGWTGMAELQVTDDDLRMLFEHGTIELAEARDLPCHTGLRLLSTRGSALGRVTPDKSVRLVRGDREVFGLRGRSAEQRIALDLLMDPEIGIVSIGGRAGTGKSALALCAGLEAVLERRQHRKIIVFRPLYAVGGQELGYLPGTENDKMGPWAQAVYDTLGAVTSPEVIEEVLDRGMLEVLPLTHIRGRSLHDAFVIVDEAQSLERGVLLTVLSRIGSNSRVVLTHDVAQRDNLRVGRHDGVVAVVEKLKGHPLFAHITLTRSERSPIAALVTEMLQDITI.

One can recognise a PINc domain in the interval 12–137; it reads RTYVLDTSVL…LVSKDLPMRL (126 aa).

This sequence in the N-terminal section; belongs to the PINc/VapC protein family. It in the C-terminal section; belongs to the PhoH family.

It carries out the reaction n ATP + n H2O + wound RNA = n ADP + n phosphate + unwound RNA.. The enzyme catalyses ATP + H2O = ADP + phosphate + H(+). The catalysed reaction is GTP + H2O = GDP + phosphate + H(+). Its function is as follows. Unwinds and/or cleaves 5'-tailed RNA in vitro, the reaction is maximal with hydrolyzable ATP; double-stranded (ds)RNA and dsDNA are not unwound. Unlike the protein in mycobacteria there does not seem to be an antitoxin gene upstream, suggesting this is not a toxin-antitoxin system. Has ATPase and GTPase activities. The protein is Protein PhoH2 of Thermobispora bispora (strain ATCC 19993 / DSM 43833 / CBS 139.67 / JCM 10125 / KCTC 9307 / NBRC 14880 / R51).